A 119-amino-acid chain; its full sequence is Large ribosomal subunit protein bL20 (119 aa).

The protein belongs to the bacterial ribosomal protein bL20 family.

In terms of biological role, binds directly to 23S ribosomal RNA and is necessary for the in vitro assembly process of the 50S ribosomal subunit. It is not involved in the protein synthesizing functions of that subunit. The polypeptide is Large ribosomal subunit protein bL20 (Clostridium botulinum (strain ATCC 19397 / Type A)).